A 330-amino-acid polypeptide reads, in one-letter code: Phenylalanine--tRNA ligase alpha subunit (330 aa).

E257 lines the Mg(2+) pocket.

It belongs to the class-II aminoacyl-tRNA synthetase family. Phe-tRNA synthetase alpha subunit type 1 subfamily. As to quaternary structure, tetramer of two alpha and two beta subunits. It depends on Mg(2+) as a cofactor.

The protein localises to the cytoplasm. It carries out the reaction tRNA(Phe) + L-phenylalanine + ATP = L-phenylalanyl-tRNA(Phe) + AMP + diphosphate + H(+). The polypeptide is Phenylalanine--tRNA ligase alpha subunit (Nostoc punctiforme (strain ATCC 29133 / PCC 73102)).